Consider the following 245-residue polypeptide: 8-amino-3,8-dideoxy-manno-octulosonate cytidylyltransferase (245 aa).

Belongs to the KdsB family.

The protein resides in the cytoplasm. It carries out the reaction 8-amino-3,8-dideoxy-alpha-D-manno-octulosonate + CTP = CMP-8-amino-3,8-dideoxy-alpha-D-manno-oct-2-ulosonate + diphosphate. It participates in bacterial outer membrane biogenesis; lipopolysaccharide biosynthesis. Functionally, activates KDO8N (a required 8-carbon sugar) for incorporation into bacterial lipopolysaccharide in the Shewanella genus. This is 8-amino-3,8-dideoxy-manno-octulosonate cytidylyltransferase from Shewanella baltica (strain OS195).